Reading from the N-terminus, the 161-residue chain is Insulin-like growth factor 1, juvenile form (161 aa).

The tract at residues G45–T73 is b. 3 cysteine pairs are disulfide-bonded: C50–C92, C62–C105, and C91–C96. Positions G74 to R85 are c. Residues G86–A106 are a. The tract at residues P107–P114 is d. The interval G111–I161 is disordered. Positions R115–I161 are cleaved as a propeptide — e peptide.

The protein belongs to the insulin family.

It is found in the secreted. Functionally, the insulin-like growth factors, isolated from plasma, are structurally and functionally related to insulin but have a much higher growth-promoting activity. Acts as a ligand for IGF1R. Binds to the alpha subunit of IGF1R, leading to the activation of the intrinsic tyrosine kinase activity which autophosphorylates tyrosine residues in the beta subunit thus initiatiating a cascade of down-stream signaling events leading to activation of the PI3K-AKT/PKB and the Ras-MAPK pathways. Binds to integrins. Its binding to integrins and subsequent ternary complex formation with integrins and IGFR1 are essential for IGF1 signaling. The polypeptide is Insulin-like growth factor 1, juvenile form (Cyprinus carpio (Common carp)).